The following is a 184-amino-acid chain: Peptide methionine sulfoxide reductase (184 aa).

Position 58 is a phosphoserine (Ser58).

It belongs to the MsrA Met sulfoxide reductase family.

The enzyme catalyses L-methionyl-[protein] + [thioredoxin]-disulfide + H2O = L-methionyl-(S)-S-oxide-[protein] + [thioredoxin]-dithiol. The catalysed reaction is [thioredoxin]-disulfide + L-methionine + H2O = L-methionine (S)-S-oxide + [thioredoxin]-dithiol. Functionally, has an important function as a repair enzyme for proteins that have been inactivated by oxidation. Catalyzes the reversible oxidation-reduction of methionine sulfoxide in proteins to methionine. Also able to reduce dimethyl sulfoxide (DMSO) as well, with DMS as the product. The chain is Peptide methionine sulfoxide reductase (MXR1) from Saccharomyces cerevisiae (strain ATCC 204508 / S288c) (Baker's yeast).